Here is a 304-residue protein sequence, read N- to C-terminus: Glutaminase (304 aa).

Residues Ser-63, Asn-114, Glu-158, Asn-165, Tyr-189, Tyr-240, and Val-258 each coordinate substrate.

It belongs to the glutaminase family. In terms of assembly, homotetramer.

It carries out the reaction L-glutamine + H2O = L-glutamate + NH4(+). The sequence is that of Glutaminase from Shewanella oneidensis (strain ATCC 700550 / JCM 31522 / CIP 106686 / LMG 19005 / NCIMB 14063 / MR-1).